A 154-amino-acid polypeptide reads, in one-letter code: Ubiquitin-conjugating enzyme E2 L3 (154 aa).

One can recognise a UBC core domain in the interval 2-149 (AASRRLMKEL…AEEFTKKYGE (148 aa)). The active-site Glycyl thioester intermediate is the Cys-86. At Lys-131 the chain carries N6-acetyllysine.

It belongs to the ubiquitin-conjugating enzyme family. Interacts with PRKN; involved in ubiquitination and degradation of misfolded proteins. Interacts with UBE3A. Interacts with CCNB1IP1, CBL, ZAP70, RNF19A, RNF19B and RNF144B. Interacts with ARIH1. Interacts with ARIH2 (via RING-type 1). Interacts with NCOA1; they functionally interact to regulate progesterone receptor transcriptional activity. Interacts with NDFIP1 (via N-terminus); the interaction mediates recruitment of UBE2L3 to ITCH and causes MAP3K7 ubiquitination. In terms of processing, ubiquitinated. The alteration of UBE2L3 protein levels during the S-phase of the cell cycle is due to ubiquitin-dependent proteasomal degradation. Autoubiquitinated in vitro.

Its subcellular location is the nucleus. It localises to the cytoplasm. It catalyses the reaction S-ubiquitinyl-[E1 ubiquitin-activating enzyme]-L-cysteine + [E2 ubiquitin-conjugating enzyme]-L-cysteine = [E1 ubiquitin-activating enzyme]-L-cysteine + S-ubiquitinyl-[E2 ubiquitin-conjugating enzyme]-L-cysteine.. The protein operates within protein modification; protein ubiquitination. In terms of biological role, ubiquitin-conjugating enzyme E2 that specifically acts with HECT-type and RBR family E3 ubiquitin-protein ligases. Does not function with most RING-containing E3 ubiquitin-protein ligases because it lacks intrinsic E3-independent reactivity with lysine: in contrast, it has activity with the RBR family E3 enzymes, such as PRKN, RNF31 and ARIH1, that function like RING-HECT hybrids. Accepts ubiquitin from the E1 complex and catalyzes its covalent attachment to other proteins. Mediates ubiquitination by the CUL9-RBX1 complex. In vitro catalyzes 'Lys-11'-linked polyubiquitination. Involved in the selective degradation of short-lived and abnormal proteins. Down-regulated during the S-phase it is involved in progression through the cell cycle. Regulates nuclear hormone receptors transcriptional activity. May play a role in myelopoiesis. The chain is Ubiquitin-conjugating enzyme E2 L3 (UBE2L3) from Bos taurus (Bovine).